The sequence spans 122 residues: Large ribosomal subunit protein eL18 (122 aa).

Belongs to the eukaryotic ribosomal protein eL18 family.

In Pyrobaculum aerophilum (strain ATCC 51768 / DSM 7523 / JCM 9630 / CIP 104966 / NBRC 100827 / IM2), this protein is Large ribosomal subunit protein eL18.